The chain runs to 173 residues: Shikimate kinase (173 aa).

Position 12–17 (12–17 (GSGKTT)) interacts with ATP. Thr16 contributes to the Mg(2+) binding site. Substrate is bound by residues Asp34, Arg58, and Gly80. ATP is bound at residue Arg118. Position 136 (Arg136) interacts with substrate.

It belongs to the shikimate kinase family. In terms of assembly, monomer. The cofactor is Mg(2+).

Its subcellular location is the cytoplasm. It carries out the reaction shikimate + ATP = 3-phosphoshikimate + ADP + H(+). It functions in the pathway metabolic intermediate biosynthesis; chorismate biosynthesis; chorismate from D-erythrose 4-phosphate and phosphoenolpyruvate: step 5/7. Functionally, catalyzes the specific phosphorylation of the 3-hydroxyl group of shikimic acid using ATP as a cosubstrate. The chain is Shikimate kinase from Moorella thermoacetica (strain ATCC 39073 / JCM 9320).